A 270-amino-acid polypeptide reads, in one-letter code: Phosphatidate cytidylyltransferase (270 aa).

8 helical membrane-spanning segments follow: residues 17-37 (FVVLCFVSYESLIGLVSAILI), 55-75 (FFYVILLALYPVLYGLVFEEP), 81-101 (ILFITGVVFSLITDKDPSQVF), 104-124 (VAAFSIALIYVTFFLSFFLPI), 129-149 (GAANALLVLTSTWVFDSFAYF), 170-190 (EGVIGGFLGVVIYTFLYRLVV), 193-213 (LLSVNVISFRTFLPFAATVAI), and 248-268 (IDGLLFVAPVSYIVFKILEGV).

Belongs to the CDS family.

It localises to the cell membrane. It carries out the reaction a 1,2-diacyl-sn-glycero-3-phosphate + CTP + H(+) = a CDP-1,2-diacyl-sn-glycerol + diphosphate. The protein operates within phospholipid metabolism; CDP-diacylglycerol biosynthesis; CDP-diacylglycerol from sn-glycerol 3-phosphate: step 3/3. This Thermotoga maritima (strain ATCC 43589 / DSM 3109 / JCM 10099 / NBRC 100826 / MSB8) protein is Phosphatidate cytidylyltransferase (cdsA).